A 297-amino-acid chain; its full sequence is rRNA 2'-O-methyltransferase fibrillarin (297 aa).

Positions 1 to 56 (MRGGFGRGGGGRGGSRGGRGGFGRGGGRGGGRGGGRGGGRGGGRGGGRGGGRGGAG) are disordered. An asymmetric dimethylarginine mark is found at arginine 2, arginine 7, arginine 12, arginine 16, arginine 19, arginine 24, arginine 28, arginine 32, arginine 36, arginine 40, arginine 44, arginine 48, and arginine 52. S-adenosyl-L-methionine-binding positions include 149–150 (TT), 168–169 (EF), 192–193 (DA), and 212–215 (DVAQ).

Belongs to the methyltransferase superfamily. Fibrillarin family. Component of box C/D small nucleolar ribonucleoprotein (snoRNP) particles. It is associated with the U3, U8 and U13 small nuclear RNAs. By homology to other fibrillarins, some or all of the N-terminal domain arginines are modified to asymmetric dimethylarginine (DMA).

It localises to the nucleus. It is found in the nucleolus. The enzyme catalyses L-glutaminyl-[histone H2A] + S-adenosyl-L-methionine = N(5)-methyl-L-glutaminyl-[histone H2A] + S-adenosyl-L-homocysteine + H(+). S-adenosyl-L-methionine-dependent methyltransferase that has the ability to methylate both RNAs and proteins. Involved in pre-rRNA processing. Utilizes the methyl donor S-adenosyl-L-methionine to catalyze the site-specific 2'-hydroxyl methylation of ribose moieties in pre-ribosomal RNA. Site specificity is provided by a guide RNA that base pairs with the substrate. Methylation occurs at a characteristic distance from the sequence involved in base pairing with the guide RNA. Also acts as a protein methyltransferase by mediating methylation of 'Gln-105' of histone H2A (H2AQ105me), a modification that impairs binding of the FACT complex and is specifically present at 35S ribosomal DNA locus. This Leishmania major protein is rRNA 2'-O-methyltransferase fibrillarin.